Here is a 1342-residue protein sequence, read N- to C-terminus: Restriction of telomere capping protein 1 (1342 aa).

The segment at 1–39 (MSLSPHVENASIPKGSTPIPKNRNVSSIGKGEFLGSSSS) is disordered. WD repeat units lie at residues 207–248 (NKFS…SIDN), 256–296 (EHTR…SKSS), 305–342 (TASD…YKFA), 367–406 (AHTG…NAAE), 439–486 (NTGY…IPKH), and 489–527 (LSET…TVLE). 5 disordered regions span residues 559–593 (PELQ…IGGI), 600–619 (TGLT…GPTF), 630–651 (ASSF…ENRE), 736–766 (KNAT…DDDD), and 788–831 (LMNE…DRSR). Over residues 630–644 (ASSFNSSSASLTSLT) the composition is skewed to low complexity. Residues 753 to 766 (DDGDDDDDDDDDDD) show a composition bias toward acidic residues. Positions 815–824 (SSISSISASR) are enriched in low complexity. One copy of the WD 7 repeat lies at 844 to 884 (KIQTLVDLISIATHNASVYLSIDDLTNFKIWILIRDSLLWD). Disordered stretches follow at residues 942 to 963 (AFRA…KLKE) and 1014 to 1047 (DEHE…PILQ). 2 stretches are compositionally biased toward basic and acidic residues: residues 952 to 963 (DAEKKPVSKLKE) and 1016 to 1028 (HEHQ…HDSP). Phosphoserine occurs at positions 1037, 1081, 1088, 1090, 1124, and 1134. WD repeat units follow at residues 1130–1170 (SRPD…KQLY) and 1217–1256 (LFGI…LITN). An RING-type; degenerate zinc finger spans residues 1294 to 1336 (CVLCERPLKKLTMVILPCGHEGHFQCIQEWFLDENEQECPGGC).

This sequence belongs to the WD repeat RTC1 family.

The protein resides in the vacuole. May be involved in a process influencing telomere capping. The sequence is that of Restriction of telomere capping protein 1 (RTC1) from Saccharomyces cerevisiae (strain JAY291) (Baker's yeast).